Here is a 629-residue protein sequence, read N- to C-terminus: tRNA uridine 5-carboxymethylaminomethyl modification enzyme MnmG (629 aa).

FAD-binding positions include 13–18, V125, and S180; that span reads GGGHAG. 273 to 287 contributes to the NAD(+) binding site; sequence GPRYCPSIEDKVMRF. FAD is bound at residue Q370.

Belongs to the MnmG family. As to quaternary structure, homodimer. Heterotetramer of two MnmE and two MnmG subunits. FAD serves as cofactor.

The protein resides in the cytoplasm. In terms of biological role, NAD-binding protein involved in the addition of a carboxymethylaminomethyl (cmnm) group at the wobble position (U34) of certain tRNAs, forming tRNA-cmnm(5)s(2)U34. The polypeptide is tRNA uridine 5-carboxymethylaminomethyl modification enzyme MnmG (Citrobacter koseri (strain ATCC BAA-895 / CDC 4225-83 / SGSC4696)).